The primary structure comprises 1323 residues: Tetratricopeptide repeat protein 21 homolog (1323 aa).

TPR repeat units follow at residues 56 to 89, 411 to 444, 580 to 613, 667 to 700, 702 to 735, 736 to 768, 770 to 802, 804 to 835, 845 to 878, 892 to 925, 927 to 959, 961 to 993, 995 to 1027, 1031 to 1064, 1203 to 1236, 1238 to 1270, and 1272 to 1305; these read VPLA…QNFS, ESPF…LIEM, SLYH…PKKE, HQLV…QSNF, LSRI…EPTP, GSYS…QSKD, QLAE…YKDK, MRLK…EPEP, IQFL…HNKI, ARIC…YETD, KSNL…DPHN, EANL…NPLH, HALF…NPRC, AGYS…PNVV, EKCW…NCNS, RAFE…TNQK, and CSFG…NPQY.

It belongs to the TTC21 family.

The chain is Tetratricopeptide repeat protein 21 homolog from Caenorhabditis briggsae.